We begin with the raw amino-acid sequence, 154 residues long: uncharacterized protein (154 aa).

This is an uncharacterized protein from Bacillus subtilis (strain 168).